Consider the following 371-residue polypeptide: DNA primase DnaG (371 aa).

One can recognise a Toprim domain in the interval 173-248 (DEIILVEGRA…DIDYVAVAPP (76 aa)). Positions 179, 221, and 223 each coordinate Mg(2+).

Belongs to the archaeal DnaG primase family. In terms of assembly, forms a ternary complex with MCM helicase and DNA. Component of the archaeal exosome complex. It depends on Mg(2+) as a cofactor.

It catalyses the reaction ssDNA + n NTP = ssDNA/pppN(pN)n-1 hybrid + (n-1) diphosphate.. RNA polymerase that catalyzes the synthesis of short RNA molecules used as primers for DNA polymerase during DNA replication. Also part of the exosome, which is a complex involved in RNA degradation. Acts as a poly(A)-binding protein that enhances the interaction between heteromeric, adenine-rich transcripts and the exosome. In Nanoarchaeum equitans (strain Kin4-M), this protein is DNA primase DnaG.